Here is a 255-residue protein sequence, read N- to C-terminus: Transcription factor CAULIFLOWER (255 aa).

Positions 1-61 (MGRGRVELKR…GKLFEYSSES (61 aa)) constitute an MADS-box domain. The region spanning 90 to 180 (QTNWSMEYSR…TKQIKERENI (91 aa)) is the K-box domain. Positions 90–198 (QTNWSMEYSR…EQLNRSVDDV (109 aa)) form a coiled coil.

Homodimer capable of binding to CArG-box sequences. In terms of tissue distribution, expressed in young flower primordia.

The protein localises to the nucleus. In terms of biological role, probable transcription factor that promotes early floral meristem identity in synergy with APETALA1, FRUITFULL and LEAFY. Is required subsequently for the transition of an inflorescence meristem into a floral meristem. Seems to be partially redundant to the function of APETALA1. Positively regulates the APETALA1 and LEAFY expression. The polypeptide is Transcription factor CAULIFLOWER (CAL) (Arabidopsis thaliana (Mouse-ear cress)).